The following is a 559-amino-acid chain: Phosphoinositide 3-phosphatase (559 aa).

The 422-residue stretch at 120-541 (SWKSFLLENE…SSLRWWSASF (422 aa)) folds into the Myotubularin phosphatase domain. The active-site Phosphocysteine intermediate is Cys342.

This sequence belongs to the protein-tyrosine phosphatase family. Non-receptor class myotubularin subfamily.

Its subcellular location is the cytoplasm. It carries out the reaction a 1,2-diacyl-sn-glycero-3-phospho-(1D-myo-inositol-3-phosphate) + H2O = a 1,2-diacyl-sn-glycero-3-phospho-(1D-myo-inositol) + phosphate. Functionally, lipid phosphatase which dephosphorylates phosphatidylinositol 3-monophosphate (PI3P). Involved in the control of PI3P-dependent signaling and in the maintenance of endosomal system integrity. The sequence is that of Phosphoinositide 3-phosphatase from Schizosaccharomyces pombe (strain 972 / ATCC 24843) (Fission yeast).